A 288-amino-acid polypeptide reads, in one-letter code: Lipoyl synthase (288 aa).

[4Fe-4S] cluster contacts are provided by Cys-39, Cys-44, Cys-50, Cys-65, Cys-69, Cys-72, and Ser-276. Residues 51–265 enclose the Radical SAM core domain; it reads WGKGTATFMI…KETGLKKGFE (215 aa).

The protein belongs to the radical SAM superfamily. Lipoyl synthase family. Requires [4Fe-4S] cluster as cofactor.

The protein localises to the cytoplasm. The enzyme catalyses [[Fe-S] cluster scaffold protein carrying a second [4Fe-4S](2+) cluster] + N(6)-octanoyl-L-lysyl-[protein] + 2 oxidized [2Fe-2S]-[ferredoxin] + 2 S-adenosyl-L-methionine + 4 H(+) = [[Fe-S] cluster scaffold protein] + N(6)-[(R)-dihydrolipoyl]-L-lysyl-[protein] + 4 Fe(3+) + 2 hydrogen sulfide + 2 5'-deoxyadenosine + 2 L-methionine + 2 reduced [2Fe-2S]-[ferredoxin]. It participates in protein modification; protein lipoylation via endogenous pathway; protein N(6)-(lipoyl)lysine from octanoyl-[acyl-carrier-protein]: step 2/2. Functionally, catalyzes the radical-mediated insertion of two sulfur atoms into the C-6 and C-8 positions of the octanoyl moiety bound to the lipoyl domains of lipoate-dependent enzymes, thereby converting the octanoylated domains into lipoylated derivatives. In Bacteroides fragilis (strain ATCC 25285 / DSM 2151 / CCUG 4856 / JCM 11019 / LMG 10263 / NCTC 9343 / Onslow / VPI 2553 / EN-2), this protein is Lipoyl synthase.